Reading from the N-terminus, the 208-residue chain is Small ribosomal subunit protein eS8 (208 aa).

Residues 1 to 27 (MGISRDNWHKRRKTGGKRKPYHKKRKY) are disordered. The N-myristoyl glycine moiety is linked to residue glycine 2. A compositionally biased stretch (basic residues) spans 8 to 26 (WHKRRKTGGKRKPYHKKRK). Lysine 37 and lysine 128 each carry N6-acetyllysine. Threonine 130 is subject to Phosphothreonine. Position 160 is a phosphoserine (serine 160). Glycyl lysine isopeptide (Lys-Gly) (interchain with G-Cter in SUMO2) cross-links involve residues lysine 170 and lysine 193.

This sequence belongs to the eukaryotic ribosomal protein eS8 family. Component of the small ribosomal subunit. Identified in a IGF2BP1-dependent mRNP granule complex containing untranslated mRNAs. Part of the small subunit (SSU) processome, composed of more than 70 proteins and the RNA chaperone small nucleolar RNA (snoRNA) U3.

It localises to the cytoplasm. It is found in the membrane. The protein localises to the nucleus. The protein resides in the nucleolus. Component of the small ribosomal subunit. The ribosome is a large ribonucleoprotein complex responsible for the synthesis of proteins in the cell. Part of the small subunit (SSU) processome, first precursor of the small eukaryotic ribosomal subunit. During the assembly of the SSU processome in the nucleolus, many ribosome biogenesis factors, an RNA chaperone and ribosomal proteins associate with the nascent pre-rRNA and work in concert to generate RNA folding, modifications, rearrangements and cleavage as well as targeted degradation of pre-ribosomal RNA by the RNA exosome. This is Small ribosomal subunit protein eS8 (Rps8) from Mus musculus (Mouse).